We begin with the raw amino-acid sequence, 206 residues long: Oligoribonuclease (206 aa).

The 164-residue stretch at 20–183 folds into the Exonuclease domain; that stretch reads LVWLDMEMTG…ADIHESIDEL (164 aa). Y141 is an active-site residue.

Belongs to the oligoribonuclease family.

The protein resides in the cytoplasm. Functionally, 3'-to-5' exoribonuclease specific for small oligoribonucleotides. This Burkholderia lata (strain ATCC 17760 / DSM 23089 / LMG 22485 / NCIMB 9086 / R18194 / 383) protein is Oligoribonuclease.